Reading from the N-terminus, the 158-residue chain is Tryptophan-rich sensory protein (158 aa).

The next 5 helical transmembrane spans lie at 5-25 (WALF…GALL), 44-65 (WVFP…MRVA), 73-93 (ALAF…VFFG), 97-119 (MATA…WAFF), and 124-144 (WAGV…GLNF).

This sequence belongs to the TspO/BZRP family. Homodimer.

Its subcellular location is the membrane. The protein resides in the cell inner membrane. Its function is as follows. May play a role in the transmembrane transport of tetrapyrroles and similar compounds, and thereby contribute to the regulation of tetrapyrrole biosynthesis. Binds tetrapyrroles and promotes the photooxidative degradation of protoporphyrin IX. Binds protoporphyrin IX, hemin, and coproporphyrin III, but does not bind delta-aminolevulinic acid. Can bind bilirubin, curcumin, gossypol, retinoic acid, cholesterol and the benzodiazepine receptor agonist PK-11195 (in vitro). Plays a role in the response to low oxygen levels and in the regulation of the biosynthesis of photosynthetic pigments. The polypeptide is Tryptophan-rich sensory protein (Cereibacter sphaeroides (Rhodobacter sphaeroides)).